The sequence spans 179 residues: Isopentenyl-diphosphate Delta-isomerase (179 aa).

Mn(2+)-binding residues include His-24 and His-30. The region spanning 28–160 (LLHRAFSIFI…PEKFTVWFLT (133 aa)) is the Nudix hydrolase domain. Cys-65 is an active-site residue. Mn(2+) is bound at residue His-67. Glu-85 contacts Mg(2+). 2 residues coordinate Mn(2+): Glu-110 and Glu-112. Glu-112 is a catalytic residue.

Belongs to the IPP isomerase type 1 family. In terms of assembly, homodimer. The cofactor is Mg(2+). It depends on Mn(2+) as a cofactor.

It localises to the cytoplasm. The catalysed reaction is isopentenyl diphosphate = dimethylallyl diphosphate. It functions in the pathway isoprenoid biosynthesis; dimethylallyl diphosphate biosynthesis; dimethylallyl diphosphate from isopentenyl diphosphate: step 1/1. Functionally, catalyzes the 1,3-allylic rearrangement of the homoallylic substrate isopentenyl (IPP) to its highly electrophilic allylic isomer, dimethylallyl diphosphate (DMAPP). The sequence is that of Isopentenyl-diphosphate Delta-isomerase from Serratia proteamaculans (strain 568).